We begin with the raw amino-acid sequence, 101 residues long: UPF0134 protein MPN_675 (101 aa).

The protein belongs to the UPF0134 family.

This chain is UPF0134 protein MPN_675, found in Mycoplasma pneumoniae (strain ATCC 29342 / M129 / Subtype 1) (Mycoplasmoides pneumoniae).